An 89-amino-acid chain; its full sequence is Acylphosphatase (89 aa).

An Acylphosphatase-like domain is found at R3–R89. Residues R18 and N36 contribute to the active site.

The protein belongs to the acylphosphatase family.

The enzyme catalyses an acyl phosphate + H2O = a carboxylate + phosphate + H(+). This Rhodococcus jostii (strain RHA1) protein is Acylphosphatase (acyP).